The chain runs to 310 residues: Aspartate carbamoyltransferase catalytic subunit (310 aa).

The carbamoyl phosphate site is built by R58 and T59. Position 86 (K86) interacts with L-aspartate. Carbamoyl phosphate-binding residues include R108, H137, and Q140. L-aspartate contacts are provided by R170 and R225. Carbamoyl phosphate contacts are provided by G264 and P265.

Belongs to the aspartate/ornithine carbamoyltransferase superfamily. ATCase family. As to quaternary structure, heterododecamer (2C3:3R2) of six catalytic PyrB chains organized as two trimers (C3), and six regulatory PyrI chains organized as three dimers (R2).

The catalysed reaction is carbamoyl phosphate + L-aspartate = N-carbamoyl-L-aspartate + phosphate + H(+). Its pathway is pyrimidine metabolism; UMP biosynthesis via de novo pathway; (S)-dihydroorotate from bicarbonate: step 2/3. Functionally, catalyzes the condensation of carbamoyl phosphate and aspartate to form carbamoyl aspartate and inorganic phosphate, the committed step in the de novo pyrimidine nucleotide biosynthesis pathway. The polypeptide is Aspartate carbamoyltransferase catalytic subunit (Coxiella burnetii (strain CbuG_Q212) (Coxiella burnetii (strain Q212))).